The sequence spans 366 residues: Spermidine/putrescine import ATP-binding protein PotA (366 aa).

In terms of domain architecture, ABC transporter spans 14-247 (ISARALRKVY…PADRFVADFI (234 aa)). An ATP-binding site is contributed by 49-56 (GPSGCGKT).

The protein belongs to the ABC transporter superfamily. Spermidine/putrescine importer (TC 3.A.1.11.1) family. The complex is composed of two ATP-binding proteins (PotA), two transmembrane proteins (PotB and PotC) and a solute-binding protein (PotD).

Its subcellular location is the cell inner membrane. The catalysed reaction is ATP + H2O + polyamine-[polyamine-binding protein]Side 1 = ADP + phosphate + polyamineSide 2 + [polyamine-binding protein]Side 1.. Part of the ABC transporter complex PotABCD involved in spermidine/putrescine import. Responsible for energy coupling to the transport system. The sequence is that of Spermidine/putrescine import ATP-binding protein PotA from Ruegeria pomeroyi (strain ATCC 700808 / DSM 15171 / DSS-3) (Silicibacter pomeroyi).